A 193-amino-acid polypeptide reads, in one-letter code: Superoxide dismutase [Fe] (193 aa).

Residues H27, H74, D157, and H161 each contribute to the Fe cation site.

This sequence belongs to the iron/manganese superoxide dismutase family. In terms of assembly, homodimer. It depends on Fe cation as a cofactor.

It carries out the reaction 2 superoxide + 2 H(+) = H2O2 + O2. Destroys superoxide anion radicals which are normally produced within the cells and which are toxic to biological systems. Partially complements double sodA-sodB deletions in E.coli. The protein is Superoxide dismutase [Fe] of Pseudomonas aeruginosa (strain ATCC 15692 / DSM 22644 / CIP 104116 / JCM 14847 / LMG 12228 / 1C / PRS 101 / PAO1).